The sequence spans 311 residues: Ribosomal RNA large subunit methyltransferase F (311 aa).

This sequence belongs to the methyltransferase superfamily. METTL16/RlmF family.

It is found in the cytoplasm. It carries out the reaction adenosine(1618) in 23S rRNA + S-adenosyl-L-methionine = N(6)-methyladenosine(1618) in 23S rRNA + S-adenosyl-L-homocysteine + H(+). Functionally, specifically methylates the adenine in position 1618 of 23S rRNA. The sequence is that of Ribosomal RNA large subunit methyltransferase F from Pectobacterium atrosepticum (strain SCRI 1043 / ATCC BAA-672) (Erwinia carotovora subsp. atroseptica).